A 271-amino-acid polypeptide reads, in one-letter code: MVISVVLLLLAAYAVPAQGLGSFVHCEPCDEKALSMCPPSPLGCELVKEPGCGCCMTCALAEGQSCGVYTERCAQGLRCLPRQDEEKPLHALLHGRGVCLNEKSYGEQTKIERDSREHEEPTTSEMAEETYSPKVFRPKHTRISELKAEAVKKDRRKKLTQSKFVGGAENTAHPRVIPAPEMRQESEQGPCRRHMEASLQEFKASPRMVPRAVYLPNCDRKGFYKRKQCKPSRGRKRGICWCVDKYGMKLPGMEYVDGDFQCHAFDSSNVE.

A signal peptide spans methionine 1–glycine 19. Residues serine 22–glutamate 102 enclose the IGFBP N-terminal domain. 6 disulfides stabilise this stretch: cysteine 26–cysteine 52, cysteine 29–cysteine 54, cysteine 37–cysteine 55, cysteine 44–cysteine 58, cysteine 66–cysteine 79, and cysteine 73–cysteine 99. Over residues threonine 109–proline 121 the composition is skewed to basic and acidic residues. Residues threonine 109–glutamate 129 are disordered. Residue serine 115 is modified to Phosphoserine. The Thyroglobulin type-1 domain maps to glutamine 188–cysteine 262. Disulfide bonds link cysteine 191–cysteine 218, cysteine 229–cysteine 240, and cysteine 242–cysteine 262.

Interacts with IGF1; this interaction enhances the growth stimulatory effects of IGF1 on fibroblasts. Interacts with CAV1; this interaction allows trafficking of IGFBP5 from the plasma membrane to the nucleus. Interacts with NCL; this interaction is necessary for IGFBP5 localization to the nucleus. In terms of tissue distribution, most abundant in kidney, uterus and gastrocnemius muscle.

It localises to the secreted. The protein localises to the cytoplasm. It is found in the nucleus. In terms of biological role, multifunctional protein that plays a critical role in regulating the availability of IGFs to their receptors and thereby regulates IGF-mediated cellular processes including proliferation, differentiation, and apoptosis in a cell-type specific manner. Increases the cell proliferation of osteoblasts, intestinal smooth muscle cells and neuroblastoma cells. Enhances adhesion and survival of epithelial cells but decreases adhesion of mesenchymal cells. Once secreted, acts as a major mediator of mTORC1-dependent feedback inhibition of IGF1 signaling. Also plays a role in the induction of extracellular matrix (ECM) production and deposition independently of its nuclear translocation and binding to IGFs. Acts itself as a growth factor that can act independently of IGFs to regulate bone formation. Acts as a ligand for the ROR1 receptor which triggers formation of ROR1/HER2 heterodimer to enhance CREB oncogenic signaling. The chain is Insulin-like growth factor-binding protein 5 (Igfbp5) from Mus musculus (Mouse).